A 246-amino-acid polypeptide reads, in one-letter code: Bidirectional sugar transporter SWEET3a (246 aa).

The Extracellular segment spans residues 1–6; that stretch reads MFPDIR. The chain crosses the membrane as a helical span at residues 7 to 27; sequence FIVGIIGSVACMLLYSAPILT. Positions 7–96 constitute a MtN3/slv 1 domain; sequence FIVGIIGSVA…ISIYVWFAPR (90 aa). Residues 28-42 are Cytoplasmic-facing; it reads FKRVIKKASVEEFSC. A helical transmembrane segment spans residues 43–63; it reads IPYILALFSCLTYSWYGFPVV. The Extracellular segment spans residues 64–74; the sequence is SYGWENMTVCS. Residue N69 is glycosylated (N-linked (GlcNAc...) asparagine). A helical transmembrane segment spans residues 75–95; the sequence is ISSLGVLFEGTFISIYVWFAP. Residues 96-101 lie on the Cytoplasmic side of the membrane; it reads RGKKKQ. Residues 102-122 form a helical membrane-spanning segment; sequence VMLMASLILAVFCMTVFFSSF. The Extracellular segment spans residues 123–131; the sequence is SIHNHHIRK. Residues 132-152 form a helical membrane-spanning segment; sequence VFVGSVGLVSSISMYGSPLVA. Residues 133-217 form the MtN3/slv 2 domain; it reads FVGSVGLVSS…VVYCIYSKCK (85 aa). Over 153–166 the chain is Cytoplasmic; sequence MKQVIRTKSVEFMP. A helical transmembrane segment spans residues 167–187; the sequence is FYLSLFTLFTSLTWMAYGVIG. Residues 188–191 are Extracellular-facing; sequence RDPF. A helical transmembrane segment spans residues 192–212; it reads IATPNCIGSIMGILQLVVYCI. Residues 213–246 lie on the Cytoplasmic side of the membrane; sequence YSKCKEAPKVLHDIEQANVVKIPTSHVDTKGHNP.

It belongs to the SWEET sugar transporter family. Forms homooligomers and/or heterooligomers.

It localises to the cell membrane. Its function is as follows. Mediates both low-affinity uptake and efflux of sugar across the plasma membrane. The sequence is that of Bidirectional sugar transporter SWEET3a (SWEET3A) from Oryza sativa subsp. japonica (Rice).